The chain runs to 132 residues: Small ribosomal subunit protein uS8 (132 aa).

Belongs to the universal ribosomal protein uS8 family. Part of the 30S ribosomal subunit. Contacts proteins S5 and S12.

Its function is as follows. One of the primary rRNA binding proteins, it binds directly to 16S rRNA central domain where it helps coordinate assembly of the platform of the 30S subunit. The chain is Small ribosomal subunit protein uS8 from Brucella abortus (strain S19).